The sequence spans 310 residues: Ferredoxin--NADP reductase (310 aa).

Positions 26, 34, 39, 78, 108, 268, and 308 each coordinate FAD.

It belongs to the ferredoxin--NADP reductase type 2 family. Homodimer. The cofactor is FAD.

It catalyses the reaction 2 reduced [2Fe-2S]-[ferredoxin] + NADP(+) + H(+) = 2 oxidized [2Fe-2S]-[ferredoxin] + NADPH. The polypeptide is Ferredoxin--NADP reductase (Lactobacillus helveticus (strain DPC 4571)).